Here is a 74-residue protein sequence, read N- to C-terminus: Anaphase-promoting complex subunit 13 (74 aa).

A disordered region spans residues 33 to 53 (LNELPDPEQDNGGTTESVKEQ).

This sequence belongs to the APC13 family. In terms of assembly, the mammalian APC/C is composed at least of 14 distinct subunits ANAPC1, ANAPC2, CDC27/APC3, ANAPC4, ANAPC5, CDC16/APC6, ANAPC7, CDC23/APC8, ANAPC10, ANAPC11, CDC26/APC12, ANAPC13, ANAPC15 and ANAPC16 that assemble into a complex of at least 19 chains with a combined molecular mass of around 1.2 MDa; APC/C interacts with FZR1 and FBXO5.

The protein localises to the nucleus. It functions in the pathway protein modification; protein ubiquitination. Functionally, component of the anaphase promoting complex/cyclosome (APC/C), a cell cycle-regulated E3 ubiquitin ligase that controls progression through mitosis and the G1 phase of the cell cycle. The APC/C complex acts by mediating ubiquitination and subsequent degradation of target proteins: it mainly mediates the formation of 'Lys-11'-linked polyubiquitin chains and, to a lower extent, the formation of 'Lys-48'- and 'Lys-63'-linked polyubiquitin chains. The APC/C complex catalyzes assembly of branched 'Lys-11'-/'Lys-48'-linked branched ubiquitin chains on target proteins. This is Anaphase-promoting complex subunit 13 (ANAPC13) from Pongo abelii (Sumatran orangutan).